A 79-amino-acid chain; its full sequence is Exodeoxyribonuclease 7 small subunit (79 aa).

This sequence belongs to the XseB family. In terms of assembly, heterooligomer composed of large and small subunits.

The protein resides in the cytoplasm. The catalysed reaction is Exonucleolytic cleavage in either 5'- to 3'- or 3'- to 5'-direction to yield nucleoside 5'-phosphates.. Bidirectionally degrades single-stranded DNA into large acid-insoluble oligonucleotides, which are then degraded further into small acid-soluble oligonucleotides. The protein is Exodeoxyribonuclease 7 small subunit of Lactococcus lactis subsp. lactis (strain IL1403) (Streptococcus lactis).